An 812-amino-acid chain; its full sequence is Lon protease (812 aa).

A Lon N-terminal domain is found at 22 to 215; the sequence is YAVLPLRDIV…KALSFMEAEI (194 aa). Position 367-374 (367-374) interacts with ATP; the sequence is GPPGVGKT. Positions 602 to 783 constitute a Lon proteolytic domain; sequence EDQVGVVTGL…GEVLKHALVR (182 aa). Active-site residues include Ser-689 and Lys-732. The tract at residues 787–812 is disordered; the sequence is PIEWTEQENPTAVPPVEDEAGASLAH.

It belongs to the peptidase S16 family. In terms of assembly, homohexamer. Organized in a ring with a central cavity.

The protein localises to the cytoplasm. The enzyme catalyses Hydrolysis of proteins in presence of ATP.. ATP-dependent serine protease that mediates the selective degradation of mutant and abnormal proteins as well as certain short-lived regulatory proteins. Required for cellular homeostasis and for survival from DNA damage and developmental changes induced by stress. Degrades polypeptides processively to yield small peptide fragments that are 5 to 10 amino acids long. Binds to DNA in a double-stranded, site-specific manner. This chain is Lon protease, found in Brucella melitensis biotype 1 (strain ATCC 23456 / CCUG 17765 / NCTC 10094 / 16M).